The following is a 178-amino-acid chain: Meiotically up-regulated gene 95 protein (178 aa).

The Cytoplasmic segment spans residues Met1–Thr12. Residues Leu13–Phe30 form a helical; Signal-anchor for type II membrane protein membrane-spanning segment. Residues Lys31 to Asn178 lie on the Lumenal side of the membrane.

It localises to the endoplasmic reticulum membrane. Its function is as follows. Has a role in meiosis. The protein is Meiotically up-regulated gene 95 protein (mug95) of Schizosaccharomyces pombe (strain 972 / ATCC 24843) (Fission yeast).